Here is a 324-residue protein sequence, read N- to C-terminus: Acetyl-coenzyme A carboxylase carboxyl transferase subunit alpha (324 aa).

A CoA carboxyltransferase C-terminal domain is found at 44 to 298; it reads ILQRKLLNLK…KNKIRDQLDF (255 aa).

This sequence belongs to the AccA family. In terms of assembly, acetyl-CoA carboxylase is a heterohexamer composed of biotin carboxyl carrier protein (accB), biotin carboxylase (accC) and two subunits each of ACCase subunit alpha (accA) and ACCase subunit beta (accD).

Its subcellular location is the plastid. It is found in the chloroplast. It catalyses the reaction N(6)-carboxybiotinyl-L-lysyl-[protein] + acetyl-CoA = N(6)-biotinyl-L-lysyl-[protein] + malonyl-CoA. It participates in lipid metabolism; malonyl-CoA biosynthesis; malonyl-CoA from acetyl-CoA: step 1/1. In terms of biological role, component of the acetyl coenzyme A carboxylase (ACC) complex. First, biotin carboxylase catalyzes the carboxylation of biotin on its carrier protein (BCCP) and then the CO(2) group is transferred by the carboxyltransferase to acetyl-CoA to form malonyl-CoA. This is Acetyl-coenzyme A carboxylase carboxyl transferase subunit alpha from Cyanidium caldarium (Red alga).